A 387-amino-acid polypeptide reads, in one-letter code: MEQVVIVDAIRTPMGRSKGGAFRNVRAEDLSAHLMRSLLARNPALEAAALDDIYWGCVQQTLEQGFNIARNAALLAEVPHSVPAVTVNRLCGSSMQALHDAARMIMTGDAQACLVGGVEHMGHVPMSHGVDFHPGLSRNVAKAAGMMGLTAEMLARMHGISREMQDAFAARSHARAWAATQSAAFKNEIIPTGGHDADGVLKQFNYDEVIRPETTVEALATLRPAFDPVNGMVTAGTSSALSDGAAAMLVMSESRAHELGLKPRARVRSMAVVGCDPSIMGYGPVPASKLALKKAGLSASDIGVFEMNEAFAAQILPCIKDLGLIEQIDEKINLNGGAIALGHPLGCSGARISTTLLNLMERKDVQFGLATMCIGLGQGIATVFERV.

Cysteine 91 serves as the catalytic Acyl-thioester intermediate. Residues histidine 343 and cysteine 373 each act as proton acceptor in the active site.

It belongs to the thiolase-like superfamily. Thiolase family. Heterotetramer of two alpha chains (FadB) and two beta chains (FadA).

It localises to the cytoplasm. It catalyses the reaction an acyl-CoA + acetyl-CoA = a 3-oxoacyl-CoA + CoA. It functions in the pathway lipid metabolism; fatty acid beta-oxidation. Its function is as follows. Catalyzes the final step of fatty acid oxidation in which acetyl-CoA is released and the CoA ester of a fatty acid two carbons shorter is formed. Involved in the aerobic and anaerobic degradation of long-chain fatty acids. In Escherichia coli (strain K12), this protein is 3-ketoacyl-CoA thiolase FadA (fadA).